A 123-amino-acid polypeptide reads, in one-letter code: Large ribosomal subunit protein bL17 (123 aa).

Belongs to the bacterial ribosomal protein bL17 family. As to quaternary structure, part of the 50S ribosomal subunit. Contacts protein L32.

The polypeptide is Large ribosomal subunit protein bL17 (Borrelia garinii subsp. bavariensis (strain ATCC BAA-2496 / DSM 23469 / PBi) (Borreliella bavariensis)).